A 277-amino-acid chain; its full sequence is tRNA uridine(34) hydroxylase (277 aa).

Positions 126–221 (SSPDVHVIDT…YLETVRGDDS (96 aa)) constitute a Rhodanese domain. The Cysteine persulfide intermediate role is filled by Cys-181.

The protein belongs to the TrhO family.

It catalyses the reaction uridine(34) in tRNA + AH2 + O2 = 5-hydroxyuridine(34) in tRNA + A + H2O. Functionally, catalyzes oxygen-dependent 5-hydroxyuridine (ho5U) modification at position 34 in tRNAs. The sequence is that of tRNA uridine(34) hydroxylase from Anaplasma marginale (strain Florida).